The following is a 242-amino-acid chain: DNA repair protein RecO (242 aa).

Belongs to the RecO family.

Its function is as follows. Involved in DNA repair and RecF pathway recombination. This chain is DNA repair protein RecO, found in Xanthobacter autotrophicus (strain ATCC BAA-1158 / Py2).